The primary structure comprises 274 residues: Penicillin-insensitive murein endopeptidase (274 aa).

The signal sequence occupies residues 1-19 (MKKTAIALLAWFVSSASLA). 3 cysteine pairs are disulfide-bonded: C44-C265, C187-C235, and C216-C223. Residues H110, H113, D120, D147, H150, and H211 each coordinate Zn(2+). Residues 225-274 (DQPLPPPGDGCGAELQSWFEPPKPGTTKPEKKTPPPLPPSCQALLDEHVL) form a disordered region.

Belongs to the peptidase M74 family. As to quaternary structure, dimer. Zn(2+) is required as a cofactor.

The protein localises to the periplasm. Its function is as follows. Murein endopeptidase that cleaves the D-alanyl-meso-2,6-diamino-pimelyl amide bond that connects peptidoglycan strands. Likely plays a role in the removal of murein from the sacculus. The polypeptide is Penicillin-insensitive murein endopeptidase (Salmonella paratyphi A (strain AKU_12601)).